Here is a 1017-residue protein sequence, read N- to C-terminus: Probable beta-galactosidase B (1017 aa).

The signal sequence occupies residues 1-20; it reads MTRITKLCVLLLSSIGLLAA. Residue N23 is glycosylated (N-linked (GlcNAc...) asparagine). Residue Y90 participates in substrate binding. N100 carries N-linked (GlcNAc...) asparagine glycosylation. N135, A136, and E137 together coordinate substrate. The N-linked (GlcNAc...) asparagine glycan is linked to N158. N195 contacts substrate. E196 serves as the catalytic Proton donor. An N-linked (GlcNAc...) asparagine glycan is attached at N211. A substrate-binding site is contributed by Y265. C271 and C324 form a disulfide bridge. The Nucleophile role is filled by E308. Y373 is a substrate binding site. N-linked (GlcNAc...) asparagine glycans are attached at residues N411, N417, N456, N628, N681, N737, N770, N777, N785, N828, and N829.

This sequence belongs to the glycosyl hydrolase 35 family.

Its subcellular location is the secreted. It catalyses the reaction Hydrolysis of terminal non-reducing beta-D-galactose residues in beta-D-galactosides.. Functionally, cleaves beta-linked terminal galactosyl residues from gangliosides, glycoproteins, and glycosaminoglycans. The protein is Probable beta-galactosidase B (lacB) of Aspergillus niger (strain ATCC MYA-4892 / CBS 513.88 / FGSC A1513).